A 96-amino-acid chain; its full sequence is Co-chaperonin GroES (96 aa).

It belongs to the GroES chaperonin family. In terms of assembly, heptamer of 7 subunits arranged in a ring. Interacts with the chaperonin GroEL.

It localises to the cytoplasm. Functionally, together with the chaperonin GroEL, plays an essential role in assisting protein folding. The GroEL-GroES system forms a nano-cage that allows encapsulation of the non-native substrate proteins and provides a physical environment optimized to promote and accelerate protein folding. GroES binds to the apical surface of the GroEL ring, thereby capping the opening of the GroEL channel. The sequence is that of Co-chaperonin GroES from Dechloromonas aromatica (strain RCB).